The following is a 183-amino-acid chain: Maltose O-acetyltransferase (183 aa).

Asn83 contacts acetyl-CoA. His113 serves as the catalytic Proton donor/acceptor. Acetyl-CoA contacts are provided by residues Gly140, Ser158, 163–164 (TK), Arg178, and Lys181.

This sequence belongs to the transferase hexapeptide repeat family. Homodimer.

The catalysed reaction is D-maltose + acetyl-CoA = 1-O-acetylmaltose + CoA. Functionally, catalyzes the CoA-dependent transfer of an acetyl group to maltose and other sugars. Acetylates glucose exclusively at the C6 position and maltose at the C6 position of the non-reducing end glucosyl moiety. Is able to acetylate maltooligosaccharides. In Escherichia coli (strain K12), this protein is Maltose O-acetyltransferase (maa).